Reading from the N-terminus, the 117-residue chain is Transcription elongation factor A protein-like 8 (117 aa).

Composition is skewed to basic and acidic residues over residues 1-10 (MQKSCEENEG) and 61-75 (FKEDTPVRHLDPEEM). Residues 1–75 (MQKSCEENEG…PVRHLDPEEM (75 aa)) form a disordered region. Residues 73 to 100 (EEMIRGVDELERLREEIRRVRNKFVMMH) adopt a coiled-coil conformation.

The protein belongs to the TFS-II family. TFA subfamily.

It localises to the nucleus. Its function is as follows. May be involved in transcriptional regulation. This chain is Transcription elongation factor A protein-like 8 (TCEAL8), found in Homo sapiens (Human).